The following is a 241-amino-acid chain: Tetrahydromethanopterin S-methyltransferase subunit A (241 aa).

Topologically, residues 1-220 (MAEKKEPAEG…HSGVLAGKIE (220 aa)) are cytoplasmic. Residue H85 coordinates 5-hydroxybenzimidazolylcob(I)amide. The helical transmembrane segment at 221–241 (GIMVGLVLSLFVLGLLLFGGM) threads the bilayer.

The protein belongs to the MtrA family. In terms of assembly, the complex is composed of 8 subunits; MtrA, MtrB, MtrC, MtrD, MtrE, MtrF, MtrG and MtrH. Requires 5-hydroxybenzimidazolylcob(I)amide as cofactor.

It is found in the cell membrane. The enzyme catalyses 5-methyl-5,6,7,8-tetrahydromethanopterin + coenzyme M + 2 Na(+)(in) = 5,6,7,8-tetrahydromethanopterin + methyl-coenzyme M + 2 Na(+)(out). The protein operates within one-carbon metabolism; methanogenesis from CO(2); methyl-coenzyme M from 5,10-methylene-5,6,7,8-tetrahydromethanopterin: step 2/2. In terms of biological role, part of a complex that catalyzes the formation of methyl-coenzyme M and tetrahydromethanopterin from coenzyme M and methyl-tetrahydromethanopterin. This is an energy-conserving, sodium-ion translocating step. This is Tetrahydromethanopterin S-methyltransferase subunit A from Methanohalobium evestigatum (strain ATCC BAA-1072 / DSM 3721 / NBRC 107634 / OCM 161 / Z-7303).